We begin with the raw amino-acid sequence, 443 residues long: tRNA modification GTPase MnmE (443 aa).

Residues R23, E81, and K119 each coordinate (6S)-5-formyl-5,6,7,8-tetrahydrofolate. A TrmE-type G domain is found at 214-369 (GMRVAILGKP…LLSALKERAI (156 aa)). GTP-binding positions include 224 to 229 (NVGKST), 243 to 249 (SEYPGTT), and 268 to 271 (DTAG). Mg(2+) contacts are provided by S228 and T249. K443 provides a ligand contact to (6S)-5-formyl-5,6,7,8-tetrahydrofolate.

This sequence belongs to the TRAFAC class TrmE-Era-EngA-EngB-Septin-like GTPase superfamily. TrmE GTPase family. Homodimer. Heterotetramer of two MnmE and two MnmG subunits. K(+) is required as a cofactor.

The protein resides in the cytoplasm. Functionally, exhibits a very high intrinsic GTPase hydrolysis rate. Involved in the addition of a carboxymethylaminomethyl (cmnm) group at the wobble position (U34) of certain tRNAs, forming tRNA-cmnm(5)s(2)U34. This chain is tRNA modification GTPase MnmE, found in Anaplasma marginale (strain St. Maries).